The chain runs to 196 residues: Phosphoheptose isomerase (196 aa).

Positions 31–196 constitute an SIS domain; it reads VARQFKAGNK…KAGLEAQIAV (166 aa). 46 to 48 serves as a coordination point for substrate; sequence NGG. Zn(2+) contacts are provided by H55 and E59. Substrate is bound by residues E59, 88–89, 114–116, S119, and Q166; these read ND and STS. Zn(2+)-binding residues include Q166 and H174.

The protein belongs to the SIS family. GmhA subfamily. The cofactor is Zn(2+).

Its subcellular location is the cytoplasm. It carries out the reaction 2 D-sedoheptulose 7-phosphate = D-glycero-alpha-D-manno-heptose 7-phosphate + D-glycero-beta-D-manno-heptose 7-phosphate. It functions in the pathway carbohydrate biosynthesis; D-glycero-D-manno-heptose 7-phosphate biosynthesis; D-glycero-alpha-D-manno-heptose 7-phosphate and D-glycero-beta-D-manno-heptose 7-phosphate from sedoheptulose 7-phosphate: step 1/1. In terms of biological role, catalyzes the isomerization of sedoheptulose 7-phosphate in D-glycero-D-manno-heptose 7-phosphate. The protein is Phosphoheptose isomerase of Crocosphaera subtropica (strain ATCC 51142 / BH68) (Cyanothece sp. (strain ATCC 51142)).